The primary structure comprises 148 residues: Pivalyl-CoA mutase small subunit (148 aa).

Residues 8-138 enclose the B12-binding domain; that stretch reads PLRVLVTKIG…TALGQKSRAE (131 aa). Adenosylcob(III)alamin is bound at residue histidine 21.

The protein belongs to the acyl-CoA mutase small subunit family. Monomer in the absence of the PCM large subunit. Weakly interacts with the PCM large subunit; an alpha(2)beta(2) stoichiometry seems to represent the active state of the enzyme. Requires adenosylcob(III)alamin as cofactor.

It carries out the reaction 3-methylbutanoyl-CoA = 2,2-dimethylpropanoyl-CoA. Its function is as follows. Together with Xaut_5043, catalyzes the reversible isomerization between pivalyl-CoA and isovaleryl-CoA, using radical chemistry. Does not exhibit isobutyryl-CoA mutase (ICM) activity. This Xanthobacter autotrophicus (strain ATCC BAA-1158 / Py2) protein is Pivalyl-CoA mutase small subunit.